Reading from the N-terminus, the 467-residue chain is Chromosomal replication initiator protein DnaA (467 aa).

A domain I, interacts with DnaA modulators region spans residues 1–84 (MDISLDQLWD…LQVEFSVSPH (84 aa)). A domain II region spans residues 84 to 125 (HASVEAEPPSRAISPTSGRAGSLPASTTLGLEVGGSLPMRAP). A disordered region spans residues 89 to 108 (AEPPSRAISPTSGRAGSLPA). The span at 96-108 (ISPTSGRAGSLPA) shows a compositional bias: polar residues. Residues 126–342 (DLNPKYSFSR…GALIRAVAYV (217 aa)) form a domain III, AAA+ region region. Residues Gly-170, Gly-172, Lys-173, and Thr-174 each coordinate ATP. The interval 343-467 (SISGLPMSVE…LRVVANSRSS (125 aa)) is domain IV, binds dsDNA.

This sequence belongs to the DnaA family. Oligomerizes as a right-handed, spiral filament on DNA at oriC.

The protein localises to the cytoplasm. Its function is as follows. Plays an essential role in the initiation and regulation of chromosomal replication. ATP-DnaA binds to the origin of replication (oriC) to initiate formation of the DNA replication initiation complex once per cell cycle. Binds the DnaA box (a 9 base pair repeat at the origin) and separates the double-stranded (ds)DNA. Forms a right-handed helical filament on oriC DNA; dsDNA binds to the exterior of the filament while single-stranded (ss)DNA is stabiized in the filament's interior. The ATP-DnaA-oriC complex binds and stabilizes one strand of the AT-rich DNA unwinding element (DUE), permitting loading of DNA polymerase. After initiation quickly degrades to an ADP-DnaA complex that is not apt for DNA replication. Binds acidic phospholipids. The sequence is that of Chromosomal replication initiator protein DnaA from Synechococcus sp. (strain JA-2-3B'a(2-13)) (Cyanobacteria bacterium Yellowstone B-Prime).